Reading from the N-terminus, the 202-residue chain is Protein phosphatase 1 regulatory subunit 1B (202 aa).

N-acetylmethionine is present on Met-1. The tract at residues 1–202 is disordered; that stretch reads MDPKDRKKIQ…QRPAHPEPGT (202 aa). The residue at position 34 (Thr-34) is a Phosphothreonine; by PKA. Residues 41–63 are compositionally biased toward basic and acidic residues; the sequence is LSEHSSPEEEASPHQRASGEGHH. Ser-45 and Ser-46 each carry phosphoserine. Residue Thr-75 is modified to Phosphothreonine; by CDK5. Positions 89-100 are enriched in polar residues; that stretch reads HLQSISNLGENQ. Ser-102 is modified (phosphoserine). Basic and acidic residues predominate over residues 109–118; the sequence is GELRELGYPR. Over residues 119 to 136 the composition is skewed to acidic residues; it reads EEEEEEEEEDEEEEEDSQ. Ser-135 bears the Phosphoserine mark. A compositionally biased stretch (basic and acidic residues) spans 191–202; the sequence is EPQRPAHPEPGT.

The protein belongs to the protein phosphatase inhibitor 1 family. In terms of processing, dopamine- and cyclic AMP-regulated neuronal phosphoprotein. Post-translationally, phosphorylation of Thr-34 is required for activity.

Its subcellular location is the cytoplasm. Inhibitor of protein-phosphatase 1. In Bos taurus (Bovine), this protein is Protein phosphatase 1 regulatory subunit 1B (PPP1R1B).